The chain runs to 402 residues: 1-deoxy-D-xylulose 5-phosphate reductoisomerase (402 aa).

Positions 10, 11, 12, 13, 38, and 124 each coordinate NADPH. Residue lysine 125 coordinates 1-deoxy-D-xylulose 5-phosphate. An NADPH-binding site is contributed by glutamate 126. Aspartate 150 serves as a coordination point for Mn(2+). 4 residues coordinate 1-deoxy-D-xylulose 5-phosphate: serine 151, glutamate 152, serine 186, and histidine 209. Residue glutamate 152 coordinates Mn(2+). An NADPH-binding site is contributed by glycine 215. Positions 222, 227, 228, and 231 each coordinate 1-deoxy-D-xylulose 5-phosphate. Glutamate 231 contributes to the Mn(2+) binding site.

This sequence belongs to the DXR family. Mg(2+) is required as a cofactor. Requires Mn(2+) as cofactor.

The enzyme catalyses 2-C-methyl-D-erythritol 4-phosphate + NADP(+) = 1-deoxy-D-xylulose 5-phosphate + NADPH + H(+). It functions in the pathway isoprenoid biosynthesis; isopentenyl diphosphate biosynthesis via DXP pathway; isopentenyl diphosphate from 1-deoxy-D-xylulose 5-phosphate: step 1/6. Functionally, catalyzes the NADPH-dependent rearrangement and reduction of 1-deoxy-D-xylulose-5-phosphate (DXP) to 2-C-methyl-D-erythritol 4-phosphate (MEP). The protein is 1-deoxy-D-xylulose 5-phosphate reductoisomerase of Vibrio vulnificus (strain CMCP6).